We begin with the raw amino-acid sequence, 559 residues long: Non-homologous end joining factor IFFO1 (559 aa).

The disordered stretch occupies residues 21 to 57 (GPLGDSLGGDHFAGGGDLPPAPLSPAGPAAYSPPGPG). Pro residues predominate over residues 39 to 57 (PPAPLSPAGPAAYSPPGPG). Residues 65–116 (ALRNDLGSNINVLKTLNLRFRCFLAKVHELERRNRLLEKQLQQALEEGKQGR) form an LMNA binding region. Positions 73–526 (NINVLKTLNL…RLITQSGDRK (454 aa)) constitute an IF rod domain. A coiled-coil region spans residues 85 to 117 (RCFLAKVHELERRNRLLEKQLQQALEEGKQGRR). The tract at residues 158–187 (SPARSPAGPLAPSAASLSSSSTSTSTTYSS) is disordered. Positions 237–301 (EIRALYNVLA…LKVEQLKAEL (65 aa)) form a coiled coil. Residues 360 to 394 (SMGGRKRERKAAVEEDTSLSESEGPRQPDGDEEES) are disordered. An XCCR4 binding. Required for localization to the double-strand breaks (DSBs) region spans residues 450 to 525 (EQEDSLEKVI…RRLITQSGDR (76 aa)). A coiled-coil region spans residues 455–501 (LEKVIKDTESLFKTREKEYQETIDQIELELATAKNDMNRHLHEYMEM). Residues 520–559 (TQSGDRKSPAFTAVPLSDPPPPPSEAEDSDRDVSSDSSMR) are disordered. Basic and acidic residues predominate over residues 550–559 (RDVSSDSSMR).

It belongs to the intermediate filament family. Forms a heterotetramer with XRCC4. The interaction with XRCC4 is direct, involves LIG4-free XRCC4 and leads to relocalization of IFFO1 at the double-strand break (DSB) sites. Interacts with LMNA; the interaction forms an interior nucleoskeleton and the recruitment to DNA double-strand breaks. As to expression, ubiquitously expressed.

It localises to the nucleus. Its subcellular location is the nucleoplasm. The protein resides in the nucleus inner membrane. The protein localises to the nucleus matrix. Nuclear matrix protein involved in the immobilization of broken DNA ends and the suppression of chromosome translocation during DNA double-strand breaks (DSBs). Interacts with the nuclear lamina component LMNA, resulting in the formation of a nucleoskeleton that relocalizes to the DSB sites in a XRCC4-dependent manner and promotes the immobilization of the broken ends, thereby preventing chromosome translocation. Acts as a scaffold that allows the DNA repair protein XRCC4 and LMNA to assemble into a complex at the DSB sites. This is Non-homologous end joining factor IFFO1 from Homo sapiens (Human).